Reading from the N-terminus, the 1222-residue chain is ATP-dependent helicase/nuclease subunit A (1222 aa).

The UvrD-like helicase ATP-binding domain maps to 39–495 (QKRTAQQIEA…ILLKENFRSQ (457 aa)). 60 to 67 (ASAGSGKT) contacts ATP. Positions 524–810 (QLIAGSHAQT…NLMTIHKSKG (287 aa)) constitute a UvrD-like helicase C-terminal domain.

This sequence belongs to the helicase family. AddA subfamily. In terms of assembly, heterodimer of AddA and AddB/RexB. Requires Mg(2+) as cofactor.

The catalysed reaction is Couples ATP hydrolysis with the unwinding of duplex DNA by translocating in the 3'-5' direction.. It catalyses the reaction ATP + H2O = ADP + phosphate + H(+). In terms of biological role, the heterodimer acts as both an ATP-dependent DNA helicase and an ATP-dependent, dual-direction single-stranded exonuclease. Recognizes the chi site generating a DNA molecule suitable for the initiation of homologous recombination. The AddA nuclease domain is required for chi fragment generation; this subunit has the helicase and 3' -&gt; 5' nuclease activities. The sequence is that of ATP-dependent helicase/nuclease subunit A from Streptococcus pyogenes serotype M18 (strain MGAS8232).